The primary structure comprises 77 residues: Small ribosomal subunit protein bS20 (77 aa).

The disordered stretch occupies residues 47–77 (ASSSIDKAESKGLIHKNKASRDKARLAAKLG).

Belongs to the bacterial ribosomal protein bS20 family.

In terms of biological role, binds directly to 16S ribosomal RNA. This is Small ribosomal subunit protein bS20 from Streptococcus pyogenes serotype M1.